Here is a 458-residue protein sequence, read N- to C-terminus: Probable alpha-L-glutamate ligase (458 aa).

The tract at residues 1–162 (MSDNKFIIGS…YGVKSAKKSG (162 aa)) is unknown. Residues 163 to 458 (LKIGLLASNP…IEKKLGWKAE (296 aa)) are alpha-L-glutamate ligase. The region spanning 267 to 450 (LQLLQKNNLD…IAGAMIDSIE (184 aa)) is the ATP-grasp domain. ATP contacts are provided by residues Lys304, 341–342 (EF), Asp350, and 374–376 (RAN). Mg(2+) contacts are provided by Asp411, Glu423, and Asn425. Residues Asp411, Glu423, and Asn425 each contribute to the Mn(2+) site.

The protein in the C-terminal section; belongs to the RimK family. It depends on Mg(2+) as a cofactor. Mn(2+) serves as cofactor.

The sequence is that of Probable alpha-L-glutamate ligase from Shewanella halifaxensis (strain HAW-EB4).